Reading from the N-terminus, the 856-residue chain is Inactive rhomboid protein 2 (856 aa).

The tract at residues 1–115 (MASADKNGGS…PGFRRQASLS (115 aa)) is disordered. At 1–409 (MASADKNGGS…HRPYFTYWLT (409 aa)) the chain is on the cytoplasmic side. Ser90 carries the phosphoserine modification. Positions 94–106 (PRSRWQESSEKRP) are enriched in basic and acidic residues. Ser113 and Ser117 each carry phosphoserine. The segment at 165–184 (PSQEAPSFQGTESPKPCKMP) is disordered. The tract at residues 191–271 (ARGRAFRHPE…GQRCRVVKRS (81 aa)) is involved in interaction with FRMD8. Phosphoserine occurs at positions 323, 325, and 328. The chain crosses the membrane as a helical span at residues 410 to 430 (FVHVIITLLVICTYGIAPVGF). The Lumenal segment spans residues 431 to 660 (AQHVTTQLVL…PDQFYRLWLS (230 aa)). The disordered stretch occupies residues 531–553 (GPPMDKSDLGQKRTSGAVCHQDP). A helical membrane pass occupies residues 661-681 (LFLHAGVVHCLVSVVFQMTIL). Over 682–692 (RDLEKLAGWHR) the chain is Cytoplasmic. The helical transmembrane segment at 693 to 713 (IAIIFILSGITGNLASAIFLP) threads the bilayer. The Lumenal portion of the chain corresponds to 714 to 715 (YR). The chain crosses the membrane as a helical span at residues 716-736 (AEVGPAGSQFGLLACLFVELF). The Cytoplasmic segment spans residues 737–747 (QSWPLLERPWK). A helical transmembrane segment spans residues 748–768 (AFLNLSAIVLFLFICGLLPWI). Residues 769-773 (DNIAH) lie on the Lumenal side of the membrane. Residues 774 to 794 (IFGFLSGLLLAFAFLPYITFG) traverse the membrane as a helical segment. Residues 795-802 (TSDKYRKR) are Cytoplasmic-facing. Residues 803 to 823 (ALILVSLLAFAGLFAALVLWL) traverse the membrane as a helical segment. Residues 824 to 856 (YIYPINWPWIEHLTCFPFTSRFCEKYELDQVLH) lie on the Lumenal side of the membrane.

It belongs to the peptidase S54 family. As to quaternary structure, interacts with EGF. Interacts (via cytoplasmic N-terminus) with FRMD8/iTAP; this interaction leads to mutual protein stabilization. Interacts with ADAM17/TACE. In terms of tissue distribution, found in the epidermis and esophageal epithelium.

It is found in the endoplasmic reticulum membrane. Its subcellular location is the cell membrane. Regulates ADAM17 protease, a sheddase of the epidermal growth factor (EGF) receptor ligands and TNF, thereby plays a role in sleep, cell survival, proliferation, migration and inflammation. Does not exhibit any protease activity on its own. This is Inactive rhomboid protein 2 (RHBDF2) from Homo sapiens (Human).